The following is a 391-amino-acid chain: Lipid-A-disaccharide synthase (391 aa).

This sequence belongs to the LpxB family.

It catalyses the reaction a lipid X + a UDP-2-N,3-O-bis[(3R)-3-hydroxyacyl]-alpha-D-glucosamine = a lipid A disaccharide + UDP + H(+). The protein operates within bacterial outer membrane biogenesis; LPS lipid A biosynthesis. Condensation of UDP-2,3-diacylglucosamine and 2,3-diacylglucosamine-1-phosphate to form lipid A disaccharide, a precursor of lipid A, a phosphorylated glycolipid that anchors the lipopolysaccharide to the outer membrane of the cell. This Azoarcus sp. (strain BH72) protein is Lipid-A-disaccharide synthase.